The chain runs to 587 residues: MNDSLFVSLDRLLLEFVFQYEQDISTKEEMIQRINKCCEDIKENKVTICRIHETINATDEEIDHYCKHSEEIKDNCRNWKPTCDVFRKHEDYMQDQFTVYQGTVEKDKEMYHDYICQYKEVLKQYQLKYSETPFSREYYEKKREHEEIQSRVLACTEQLKMNETIFMKFRVPAPFPSLTKWTLNIVNLRCETQDILKHASNLTKSSSELKKEVDEMEIEINYLNQQISRHNETKALSETLEEKNKNTENRKELKERIFGKDEHVLTLNKTQSSQLFLPYESQKLVRPIKMHSSEPRVADIKEESSAKQSKLANIDFRQKENDTQIFNDSAVDNHSKCSHITTITSSQKFMQVRLLTPQKQSNSNQWSEKGDKDAEYGDKGTVRQVRESKCTSQAIYTEHFGKSVENDSDEVEERAENFPRTSEIPIFLGTPKAVKAPESLEKIKFPKTPPFEINRNRNAVPEVQTEKESPGLSFLMSYTSRSPGLNLFDSSVFDTEISSDQFNEHYSARNLNPLSSEQEIGNLLEKPEGEDGFTFSFPSDTSTHTFGAGKDDFSFPFSFGQGQNSIPSSSLKGFSSSSQNTTQFTFF.

Residues 356–378 form a disordered region; it reads TPQKQSNSNQWSEKGDKDAEYGD. Polar residues predominate over residues 357 to 367; sequence PQKQSNSNQWS. The span at 368–378 shows a compositional bias: basic and acidic residues; it reads EKGDKDAEYGD. Position 439 is a phosphoserine (Ser-439). A disordered region spans residues 568–587; it reads SSSLKGFSSSSQNTTQFTFF.

In terms of assembly, interacts with SYCE1. Interacts with proteasome subunit PSMA8; to participate in meiosis progression during spermatogenesis. As to expression, highest expression in retina, skeletal muscle, testis and colon.

The protein localises to the chromosome. Meiotic protein that localizes to the central element of the synaptonemal complex and is required for chromosome synapsis during meiotic recombination. Required for the appropriate processing of intermediate recombination nodules before crossover formation. The protein is Protein SIX6OS1 of Homo sapiens (Human).